A 622-amino-acid polypeptide reads, in one-letter code: WD repeat-containing protein 70 (622 aa).

A compositionally biased stretch (basic and acidic residues) spans 37-55 (TAVERSKKTLEAREKEEQI). The segment at 37 to 141 (TAVERSKKTL…DNPVKGIPDS (105 aa)) is disordered. The span at 67–84 (SSSRQKNTDTSSSSSGSE) shows a compositional bias: low complexity. Acidic residues predominate over residues 120-132 (SDDEDEEQHEDDD). WD repeat units lie at residues 148–187 (HGTK…ASLQ), 195–236 (CECH…ECVK), 249–289 (GHTA…KHKG), 298–337 (GKRV…HTKF), 344–383 (TPGT…NPLN), 389–434 (ANYF…KVYE), and 437–476 (VTEA…QRGA). Residues 508-533 (REPRQRSTRKQLEKDRLDPVKSHKPE) show a composition bias toward basic and acidic residues. Disordered regions lie at residues 508–549 (REPR…GTHG) and 602–622 (AEVE…KRKI). A compositionally biased stretch (gly residues) spans 539-549 (PGRGGRVGTHG). A compositionally biased stretch (acidic residues) spans 604-614 (VESDEEETDNE).

This sequence belongs to the WD repeat GAD-1 family.

This Xenopus tropicalis (Western clawed frog) protein is WD repeat-containing protein 70 (wdr70).